A 429-amino-acid polypeptide reads, in one-letter code: MSKTHLTTDKFAQMGLEPEVLAGLESKGFHYCTPIQALSLPLLVEGHDLAGQAQTGTGKTLAFLAATFNYLLTHPLTKPRLINQPRAIIMAPTRELAVQIYNDAESMSASTGLKLGLAYGGEGYDKQLAVLEQGVDILIGTTGRIIDYFKSKVIDLSNIQVVVLDEADRMFDLGFIKDIRFLFRRMPPATERLSMLFSATLSLRVQELAYEHMNHPEHVQIEPEQMTGVRIKEELFYPSNEDKMLLLLSLMEEEWPEKAIVFANTKHVCEDVHAWLENDGHRVGLLTGDVPQKKRMKILEDFTKGTVDILVATDVAARGLHIPDVTHVFNYDLPDDAEDYVHRIGRTGRAGKSGHSISLACEDYAFNLPAIEEYIHHPIPVSKYDREALLDDVTAPKRVFRNRQPVNRNMRDRQGGGNSNNRRRPPRKS.

The short motif at 9–37 is the Q motif element; sequence DKFAQMGLEPEVLAGLESKGFHYCTPIQA. Residues 40–219 enclose the Helicase ATP-binding domain; it reads LPLLVEGHDL…YEHMNHPEHV (180 aa). 53-60 provides a ligand contact to ATP; that stretch reads AQTGTGKT. A DEAD box motif is present at residues 165–168; that stretch reads DEAD. Positions 243–390 constitute a Helicase C-terminal domain; the sequence is KMLLLLSLME…VSKYDREALL (148 aa). The disordered stretch occupies residues 399–429; sequence VFRNRQPVNRNMRDRQGGGNSNNRRRPPRKS.

This sequence belongs to the DEAD box helicase family. RhlB subfamily. In terms of assembly, component of the RNA degradosome, which is a multiprotein complex involved in RNA processing and mRNA degradation.

The protein resides in the cytoplasm. The catalysed reaction is ATP + H2O = ADP + phosphate + H(+). DEAD-box RNA helicase involved in RNA degradation. Has RNA-dependent ATPase activity and unwinds double-stranded RNA. The sequence is that of ATP-dependent RNA helicase RhlB from Aeromonas hydrophila subsp. hydrophila (strain ATCC 7966 / DSM 30187 / BCRC 13018 / CCUG 14551 / JCM 1027 / KCTC 2358 / NCIMB 9240 / NCTC 8049).